The following is a 71-amino-acid chain: UPF0346 protein SPG_0874 (71 aa).

The protein belongs to the UPF0346 family.

In Streptococcus pneumoniae serotype 19F (strain G54), this protein is UPF0346 protein SPG_0874.